The primary structure comprises 203 residues: UPF0637 protein SERP0693 (203 aa).

It belongs to the UPF0637 family.

The polypeptide is UPF0637 protein SERP0693 (Staphylococcus epidermidis (strain ATCC 35984 / DSM 28319 / BCRC 17069 / CCUG 31568 / BM 3577 / RP62A)).